The following is a 644-amino-acid chain: MFQDNPLLAQLKQQLHSQTPRAEGVVKATEKGFGFLEVDAQKSYFIPPPQMKKVMHGDRIIAVIHSEKERESAEPEELVEPFLTRFVGKVQGKNDRLAIVPDHPLLKDAIPCRAARGLNHEFKEGDWAVAEMRRHPLKGDRSFYAELTQYITFGDDHFVPWWVTLARHNLEKEAPDGVATEMLDEGLVREDLTALDFVTIDSASTEDMDDALFAKALPDGKLQLIVAIADPTAWIAEGSKLDKAAKIRAFTNYLPGFNIPMLPRELSDDLCSLRANEVRPVLACRMTLSADGTIEDNIEFFAATIESKAKLVYDQVSDWLENTGDWQPESEAIAEQVRLLAQICQRRGEWRHNHALVFKDRPDYRFILGEKGEVLDIVAEPRRIANRIVEEAMIAANICAARVLRDKLGFGIYNVHMGFDPANADALAALLKTHGLHVDAEEVLTLDGFCKLRRELDAQPTGFLDSRIRRFQSFAEISTEPGPHFGLGLEAYATWTSPIRKYGDMINHRLLKAVIKGETATRPQDEITVQMAERRRLNRMAERDVGDWLYARFLKDKAGTDTRFAAEIVDISRGGMRVRLVDNGAIAFIPAPFLHAVRDELVCSQENGTVQIKGETAYKVTDVIDVTIAEVRMETRSIIARPVA.

The 328-residue stretch at 189-516 (REDLTALDFV…NHRLLKAVIK (328 aa)) folds into the RNB domain. In terms of domain architecture, S1 motif spans 561–643 (DTRFAAEIVD…ETRSIIARPV (83 aa)).

This sequence belongs to the RNR ribonuclease family. RNase II subfamily.

Its subcellular location is the cytoplasm. It carries out the reaction Exonucleolytic cleavage in the 3'- to 5'-direction to yield nucleoside 5'-phosphates.. In terms of biological role, involved in mRNA degradation. Hydrolyzes single-stranded polyribonucleotides processively in the 3' to 5' direction. The chain is Exoribonuclease 2 from Escherichia coli O17:K52:H18 (strain UMN026 / ExPEC).